The sequence spans 325 residues: SAM pointed domain-containing Ets transcription factor (325 aa).

Disordered regions lie at residues 27–50 and 79–100; these read GTEK…PPAT and ARAG…SQAS. Positions 119–203 constitute a PNT domain; it reads EVLKDIETAC…AHLDIWKSAA (85 aa). The segment at residues 239-322 is a DNA-binding region (ETS); that stretch reads IHLWQFLKEL…ISQRLVYQFV (84 aa).

It belongs to the ETS family. As to quaternary structure, interacts with the DNA-binding domain of the androgen receptor. Interacts with NKX3-1. In terms of tissue distribution, expressed in the accessory glands of sex organs including the prostate, seminal vesicle, coagulating gland in males, the oviduct in females, and in intestines. Expression is epithelial-specific.

It localises to the nucleus. May function as an androgen-independent transactivator of the prostate-specific antigen (PSA) promoter. Binds to 5'-GGAT-3' DNA sequences. May play a role in the regulation of the prostate gland and/or prostate cancer development. Acts as a transcriptional activator for SERPINB5 promoter. The chain is SAM pointed domain-containing Ets transcription factor (Spdef) from Mus musculus (Mouse).